The following is a 134-amino-acid chain: MDVFMKGLSMAKEGVVAAAEKTKQGVTEAAEKTKEGVLYVGSKTKEGVVQGVASVAEKTKEQASHLGGAVFSGAGNIAAATGLVKKEEFPTDLKPEEVAQEAAEEPLIEPLMEPEGESYEEQPQEEYQEYEPEA.

2 repeat units span residues 20–30 (EKTKQGVTEAA) and 31–41 (EKTKEGVLYVG). The interval 20–67 (EKTKQGVTEAAEKTKEGVLYVGSKTKEGVVQGVASVAEKTKEQASHLG) is 4 X 11 AA tandem repeats of [EGS]-K-T-K-[EQ]-[GQ]-V-X(4). A 3; approximate repeat occupies 42-56 (SKTKEGVVQGVASVA). Repeat 4 spans residues 57–67 (EKTKEQASHLG). Residues 97 to 134 (EVAQEAAEEPLIEPLMEPEGESYEEQPQEEYQEYEPEA) are disordered. Positions 98–134 (VAQEAAEEPLIEPLMEPEGESYEEQPQEEYQEYEPEA) are enriched in acidic residues. Serine 118 is subject to Phosphoserine; by BARK1, CK2 and GRK5.

This sequence belongs to the synuclein family. Post-translationally, phosphorylated. Phosphorylation by G-protein coupled receptor kinases (GRK) is more efficient than phosphorylation by CK1, CK2 and CaM-kinase II. In terms of tissue distribution, specifically present in synapses around neurons but not in glial cells.

Its subcellular location is the cytoplasm. Functionally, may be involved in neuronal plasticity. This Bos taurus (Bovine) protein is Beta-synuclein (SNCB).